The chain runs to 309 residues: S-methyl-5'-thioadenosine phosphorylase (309 aa).

Residues Thr19, 64 to 65, and 97 to 98 contribute to the phosphate site; these read RH and SA. Met201 is a substrate binding site. Phosphate is bound at residue Ser202. Position 225–227 (225–227) interacts with substrate; the sequence is DYD.

The protein belongs to the PNP/MTAP phosphorylase family. MTAP subfamily. In terms of assembly, homotrimer.

The protein resides in the cytoplasm. The protein localises to the nucleus. It carries out the reaction S-methyl-5'-thioadenosine + phosphate = 5-(methylsulfanyl)-alpha-D-ribose 1-phosphate + adenine. Its pathway is amino-acid biosynthesis; L-methionine biosynthesis via salvage pathway; S-methyl-5-thio-alpha-D-ribose 1-phosphate from S-methyl-5'-thioadenosine (phosphorylase route): step 1/1. Its function is as follows. Catalyzes the reversible phosphorylation of S-methyl-5'-thioadenosine (MTA) to adenine and 5-methylthioribose-1-phosphate. Involved in the breakdown of MTA, a major by-product of polyamine biosynthesis. Responsible for the first step in the methionine salvage pathway after MTA has been generated from S-adenosylmethionine. Has broad substrate specificity with 6-aminopurine nucleosides as preferred substrates. The polypeptide is S-methyl-5'-thioadenosine phosphorylase (Tuber melanosporum (strain Mel28) (Perigord black truffle)).